A 178-amino-acid chain; its full sequence is C-phycoerythrin class 2 subunit beta (178 aa).

2 residues coordinate phycourobilin: cysteine 50 and cysteine 61. The (2R,3E)-phycoerythrobilin site is built by cysteine 82 and cysteine 159.

The protein belongs to the phycobiliprotein family. Heterodimer of an alpha and a beta chain. Contains two covalently linked phycoerythrobilin chromophores and one covalently linked phycourobilin chromophore.

Its subcellular location is the cellular thylakoid membrane. Its function is as follows. Light-harvesting photosynthetic bile pigment-protein from the phycobiliprotein complex. The chain is C-phycoerythrin class 2 subunit beta (mpeB) from Synechococcus sp. (strain WH8020).